The chain runs to 564 residues: ATP-dependent RNA helicase DBP3 (564 aa).

The segment at 31 to 125 is disordered; it reads TKQQTMSKDK…TNYTQSSKLS (95 aa). Basic and acidic residues predominate over residues 58 to 73; the sequence is ADSKKQRKLEKQEKKD. The segment covering 74–96 has biased composition (basic residues); the sequence is KKDKKDKKEKKEKKEKKHKKEKK. The span at 112–125 shows a compositional bias: low complexity; the sequence is SSSSTNYTQSSKLS. Residues 155-181 carry the Q motif motif; that stretch reads LSFDQVQLTSAITSKLSKFDKPTPIQS. Residues 184-356 form the Helicase ATP-binding domain; that stretch reads WPFLLSGKDV…NNFMNSPVKV (173 aa). 197-204 contacts ATP; the sequence is AETGSGKT. Positions 303–306 match the DEAD box motif; the sequence is DEAD. The 150-residue stretch at 385–534 folds into the Helicase C-terminal domain; it reads KLIQLLRKYN…PVPEELLKFG (150 aa).

This sequence belongs to the DEAD box helicase family. DDX5/DBP2 subfamily.

Its subcellular location is the nucleus. It is found in the nucleolus. The enzyme catalyses ATP + H2O = ADP + phosphate + H(+). Functionally, ATP-dependent RNA helicase required for 60S ribosomal subunit synthesis. Involved in efficient pre-rRNA processing, predominantly at site A3, which is necessary for the normal formation of 25S and 5.8S rRNAs. The polypeptide is ATP-dependent RNA helicase DBP3 (DBP3) (Candida albicans (strain SC5314 / ATCC MYA-2876) (Yeast)).